The chain runs to 312 residues: Methionyl-tRNA formyltransferase (312 aa).

Position 117–120 (117–120 (SLLP)) interacts with (6S)-5,6,7,8-tetrahydrofolate.

It belongs to the Fmt family.

The enzyme catalyses L-methionyl-tRNA(fMet) + (6R)-10-formyltetrahydrofolate = N-formyl-L-methionyl-tRNA(fMet) + (6S)-5,6,7,8-tetrahydrofolate + H(+). In terms of biological role, attaches a formyl group to the free amino group of methionyl-tRNA(fMet). The formyl group appears to play a dual role in the initiator identity of N-formylmethionyl-tRNA by promoting its recognition by IF2 and preventing the misappropriation of this tRNA by the elongation apparatus. This Bordetella pertussis (strain Tohama I / ATCC BAA-589 / NCTC 13251) protein is Methionyl-tRNA formyltransferase.